Reading from the N-terminus, the 111-residue chain is Regulator of ribonuclease activity B (111 aa).

It belongs to the RraB family. Interacts with the C-terminal region of Rne.

It localises to the cytoplasm. In terms of biological role, globally modulates RNA abundance by binding to RNase E (Rne) and regulating its endonucleolytic activity. Can modulate Rne action in a substrate-dependent manner by altering the composition of the degradosome. In Pseudoalteromonas translucida (strain TAC 125), this protein is Regulator of ribonuclease activity B.